Here is an 86-residue protein sequence, read N- to C-terminus: Small ribosomal subunit protein bS20 (86 aa).

Positions Met1–Val11 are enriched in basic residues. The tract at residues Met1–Arg20 is disordered.

Belongs to the bacterial ribosomal protein bS20 family.

Its function is as follows. Binds directly to 16S ribosomal RNA. In Bifidobacterium animalis subsp. lactis (strain AD011), this protein is Small ribosomal subunit protein bS20.